The chain runs to 78 residues: Translation initiation factor IF-1, plastid (78 aa).

Residues 1-72 (MKKQDLIDME…TKGRITYRLR (72 aa)) form the S1-like domain.

This sequence belongs to the IF-1 family. Component of the 30S ribosomal translation pre-initiation complex which assembles on the 30S ribosome in the order IF-2 and IF-3, IF-1 and N-formylmethionyl-tRNA(fMet); mRNA recruitment can occur at any time during PIC assembly.

Its subcellular location is the plastid. One of the essential components for the initiation of protein synthesis. Stabilizes the binding of IF-2 and IF-3 on the 30S subunit to which N-formylmethionyl-tRNA(fMet) subsequently binds. Helps modulate mRNA selection, yielding the 30S pre-initiation complex (PIC). Upon addition of the 50S ribosomal subunit IF-1, IF-2 and IF-3 are released leaving the mature 70S translation initiation complex. In Aneura mirabilis (Parasitic liverwort), this protein is Translation initiation factor IF-1, plastid.